Consider the following 212-residue polypeptide: Peptide methionine sulfoxide reductase MsrA (212 aa).

The active site involves Cys52.

It belongs to the MsrA Met sulfoxide reductase family.

It carries out the reaction L-methionyl-[protein] + [thioredoxin]-disulfide + H2O = L-methionyl-(S)-S-oxide-[protein] + [thioredoxin]-dithiol. The enzyme catalyses [thioredoxin]-disulfide + L-methionine + H2O = L-methionine (S)-S-oxide + [thioredoxin]-dithiol. Its function is as follows. Has an important function as a repair enzyme for proteins that have been inactivated by oxidation. Catalyzes the reversible oxidation-reduction of methionine sulfoxide in proteins to methionine. The sequence is that of Peptide methionine sulfoxide reductase MsrA from Salmonella newport (strain SL254).